The primary structure comprises 47 residues: IgA-inducing protein (47 aa).

An N-terminal signal peptide occupies residues 1–24; it reads MKKRSVSGCNITILAVVFSHLSAG.

Expressed in Peyer patches, spleen, thymus, liver and mesenteric lymph node. Expressed at high levels by dendritic cells, and at lower levels by T-cells, monocytes and B-cells.

It localises to the secreted. Enhances IgA secretion from B-cells stimulated via CD40. This chain is IgA-inducing protein (IGIP), found in Bos taurus (Bovine).